We begin with the raw amino-acid sequence, 36 residues long: Photosystem II reaction center protein M (36 aa).

The helical transmembrane segment at 7 to 27 (GFVASLMFVLVPTVFLIVLFI) threads the bilayer.

Belongs to the PsbM family. As to quaternary structure, PSII is composed of 1 copy each of membrane proteins PsbA, PsbB, PsbC, PsbD, PsbE, PsbF, PsbH, PsbI, PsbJ, PsbK, PsbL, PsbM, PsbT, PsbX, PsbY, PsbZ, Psb30/Ycf12, peripheral proteins PsbO, CyanoQ (PsbQ), PsbU, PsbV and a large number of cofactors. It forms dimeric complexes.

It localises to the cellular thylakoid membrane. Its function is as follows. One of the components of the core complex of photosystem II (PSII). PSII is a light-driven water:plastoquinone oxidoreductase that uses light energy to abstract electrons from H(2)O, generating O(2) and a proton gradient subsequently used for ATP formation. It consists of a core antenna complex that captures photons, and an electron transfer chain that converts photonic excitation into a charge separation. This subunit is found at the monomer-monomer interface. The chain is Photosystem II reaction center protein M from Synechococcus sp. (strain CC9311).